We begin with the raw amino-acid sequence, 570 residues long: Peptidyl-prolyl cis-trans isomerase FKBP9 (570 aa).

A signal peptide spans 1–24 (MALGARGWRRRSLLLLLLWVTGQA). 4 PPIase FKBP-type domains span residues 54–142 (GDFV…VDIW), 166–254 (SDFV…LDLH), 278–365 (GDFL…IDFH), and 389–477 (GDYL…LELV). Residues Asn174, Asn286, Asn302, and Asn397 are each glycosylated (N-linked (GlcNAc...) asparagine). 2 EF-hand domains span residues 488–523 (WNGE…QVAT) and 533–568 (NAEM…AKHD). Ca(2+) contacts are provided by Asp501, Asp503, Asn505, Glu507, Glu512, Asp546, Asn548, Asp550, Lys552, and Glu557. A Prevents secretion from ER motif is present at residues 567-570 (HDEL).

Post-translationally, phosphorylated. Predominantly expressed in heart, skeletal muscle, lung, liver and kidney. Lower levels found in brain, spleen and testis.

Its subcellular location is the endoplasmic reticulum lumen. The enzyme catalyses [protein]-peptidylproline (omega=180) = [protein]-peptidylproline (omega=0). With respect to regulation, inhibited by FK506. Its function is as follows. PPIases accelerate the folding of proteins during protein synthesis. This Mus musculus (Mouse) protein is Peptidyl-prolyl cis-trans isomerase FKBP9 (Fkbp9).